The chain runs to 44 residues: Photosystem I reaction center subunit IX (44 aa).

Residues 7 to 27 (YLSVAPVLSTLWFGALAGLLI) traverse the membrane as a helical segment.

Belongs to the PsaJ family.

It is found in the plastid. The protein resides in the chloroplast thylakoid membrane. Functionally, may help in the organization of the PsaE and PsaF subunits. This is Photosystem I reaction center subunit IX from Eucalyptus globulus subsp. globulus (Tasmanian blue gum).